The primary structure comprises 141 residues: Arsenate reductase (141 aa).

Cys12 (nucleophile; cysteine thioarsenate intermediate) is an active-site residue.

This sequence belongs to the ArsC family. Monomer in solution.

It catalyses the reaction [glutaredoxin]-dithiol + arsenate + glutathione + H(+) = glutathionyl-S-S-[glutaredoxin] + arsenite + H2O. Inhibited by the thiol reagents iodoacetate (IAA) and N-ethylmaleimide (NEM). Activity is rapidly inactivated by the histidine-modifying reagent diethylpyrocarbonate (DEPC). Its function is as follows. Involved in resistance to arsenate. Catalyzes the reduction of arsenate [As(V)] to arsenite [As(III)]. The resulting arsenite is then extruded from the cell via the ArsAB transport system. The chain is Arsenate reductase from Escherichia coli.